A 192-amino-acid chain; its full sequence is uncharacterized protein (192 aa).

The 121-residue stretch at 72–192 (GATVLLIVPP…SLVISEFSLV (121 aa)) folds into the B12-binding domain.

This is an uncharacterized protein from Rhodobacter capsulatus (Rhodopseudomonas capsulata).